A 96-amino-acid chain; its full sequence is Putative septation protein SpoVG (96 aa).

It belongs to the SpoVG family.

In terms of biological role, essential for sporulation. Interferes with or is a negative regulator of the pathway leading to asymmetric septation. This Priestia megaterium (Bacillus megaterium) protein is Putative septation protein SpoVG.